The sequence spans 316 residues: MAAAVAVAGPSMEVEQDLPGFRFHPTEEELLDFYLSRVVLGKKLHFNIIGTLNIYRHDPWDLPGMAKIGEREWYFFVPRDRKAGNGGRPNRTTERGFWKATGSDRAIRSSGDPKRVIGLKKTLVFYQGRAPRGTKTDWVMNEYRLPDYGAARAAAPPPKEDMVLCKIYRKATPLKELEQRASAMEEMQRGSSHGDYTATRASLVHDASASTGDDYFSSDDVHDSGFLIQSSSSSAAPSGSSSKNGGAGAPREAKKEEADVTVTVASATSLQLPAVSQLPSLQLPAMDWLQDPFLTQLRSPWQDQHCLSPYAHLLYY.

The NAC domain maps to Asp17–Lys170. Residues Ile117–Glu176 mediate DNA binding. Residues Gln229 to Val260 are disordered. A compositionally biased stretch (low complexity) spans Ser230–Asn244.

It is found in the nucleus. In terms of biological role, transcription activator that binds sequence-specific DNA motifs. Involved in stress response. Plays a positive role in drought and salt stress tolerance through the modulation of abscisic acid-mediated signaling. The protein is NAC domain-containing protein 22 of Oryza sativa subsp. japonica (Rice).